The chain runs to 437 residues: Bile acid CoA-transferase BaiK (437 aa).

Asp171 functions as the Nucleophile in the catalytic mechanism.

The protein belongs to the CoA-transferase III family.

It catalyses the reaction deoxycholoyl-CoA + cholate = choloyl-CoA + deoxycholate. The catalysed reaction is allodeoxycholoyl-CoA + cholate = allodeoxycholate + choloyl-CoA. It carries out the reaction allocholate + deoxycholoyl-CoA = allocholoyl-CoA + deoxycholate. The enzyme catalyses allocholate + allodeoxycholoyl-CoA = allocholoyl-CoA + allodeoxycholate. It catalyses the reaction ursodeoxycholate + deoxycholoyl-CoA = ursodeoxycholoyl-CoA + deoxycholate. The catalysed reaction is allodeoxycholoyl-CoA + ursodeoxycholate = ursodeoxycholoyl-CoA + allodeoxycholate. It functions in the pathway lipid metabolism; bile acid biosynthesis. Its function is as follows. Functions in the bile acid 7alpha-dehydroxylation pathway, which forms secondary bile acids via the 7alpha-dehydroxylation of primary bile acids, and is carried out by intestinal anaerobic bacteria. Acts as a bile acid CoA transferase with broad bile acid substrate specificity. Catalyzes the transfer of the CoA moiety of secondary bile acid-CoA compounds to primary bile acids. Can use deoxycholoyl-CoA and allodeoxycholoyl-CoA as bile acid CoA donors and cholate, allocholate and ursodeoxycholate as bile acid CoA acceptors. Shows no activity when lithocholoyl-CoA is used as the CoA donor. This is Bile acid CoA-transferase BaiK from Clostridium scindens (strain JCM 10418 / VPI 12708).